A 213-amino-acid chain; its full sequence is Ribosomal RNA large subunit methyltransferase E (213 aa).

The S-adenosyl-L-methionine site is built by glycine 68, tryptophan 70, aspartate 88, aspartate 104, and aspartate 127. The Proton acceptor role is filled by lysine 167.

The protein belongs to the class I-like SAM-binding methyltransferase superfamily. RNA methyltransferase RlmE family.

The protein resides in the cytoplasm. It catalyses the reaction uridine(2552) in 23S rRNA + S-adenosyl-L-methionine = 2'-O-methyluridine(2552) in 23S rRNA + S-adenosyl-L-homocysteine + H(+). In terms of biological role, specifically methylates the uridine in position 2552 of 23S rRNA at the 2'-O position of the ribose in the fully assembled 50S ribosomal subunit. The protein is Ribosomal RNA large subunit methyltransferase E of Neorickettsia sennetsu (strain ATCC VR-367 / Miyayama) (Ehrlichia sennetsu).